A 207-amino-acid chain; its full sequence is Large ribosomal subunit protein bL25 (207 aa).

Positions 171 to 207 are disordered; the sequence is ESVVTVEVPEDATESTTAPEAAAAPADAAAAPAADAK. Low complexity predominate over residues 184-207; the sequence is ESTTAPEAAAAPADAAAAPAADAK.

Belongs to the bacterial ribosomal protein bL25 family. CTC subfamily. In terms of assembly, part of the 50S ribosomal subunit; part of the 5S rRNA/L5/L18/L25 subcomplex. Contacts the 5S rRNA. Binds to the 5S rRNA independently of L5 and L18.

In terms of biological role, this is one of the proteins that binds to the 5S RNA in the ribosome where it forms part of the central protuberance. This chain is Large ribosomal subunit protein bL25, found in Bifidobacterium longum subsp. infantis (strain ATCC 15697 / DSM 20088 / JCM 1222 / NCTC 11817 / S12).